The following is a 447-amino-acid chain: Pup--protein ligase 2 (447 aa).

Glu4 contacts Mg(2+). ATP is bound at residue Arg48. Residue Tyr50 participates in Mg(2+) binding. The active-site Proton acceptor is the Asp52. Glu58 lines the Mg(2+) pocket. ATP-binding residues include Thr61 and Trp414.

The protein belongs to the Pup ligase/Pup deamidase family. Pup-conjugating enzyme subfamily.

The catalysed reaction is ATP + [prokaryotic ubiquitin-like protein]-L-glutamate + [protein]-L-lysine = ADP + phosphate + N(6)-([prokaryotic ubiquitin-like protein]-gamma-L-glutamyl)-[protein]-L-lysine.. The protein operates within protein degradation; proteasomal Pup-dependent pathway. It participates in protein modification; protein pupylation. Catalyzes the covalent attachment of the prokaryotic ubiquitin-like protein modifier Pup to the proteasomal substrate proteins, thereby targeting them for proteasomal degradation. This tagging system is termed pupylation. The ligation reaction involves the side-chain carboxylate of the C-terminal glutamate of Pup and the side-chain amino group of a substrate lysine. The chain is Pup--protein ligase 2 from Rhodococcus erythropolis (Arthrobacter picolinophilus).